We begin with the raw amino-acid sequence, 411 residues long: Pre-mRNA-splicing factor dre4 (411 aa).

In terms of domain architecture, WW 1 spans 3 to 36 (QPLPPGWTEHKAPSGIPYYWNAELKKSTYQRPSF). A disordered region spans residues 65–84 (NAEERKNSRDLRKQLPDRPK). Residues 66–83 (AEERKNSRDLRKQLPDRP) show a composition bias toward basic and acidic residues. One can recognise a WW 2 domain in the interval 89-122 (IPNNDSWVVVFTKKNRYFFHNLKSHESYWEPPLE). Positions 138–209 (ISKDSSQSQN…KSHSAEELEF (72 aa)) are disordered. The segment covering 140–151 (KDSSQSQNVDSG) has biased composition (polar residues). Residues 152-166 (KTNHEEIHESRHLQT) show a composition bias toward basic and acidic residues. The span at 167-179 (EIEEPSGLEESSE) shows a compositional bias: acidic residues. Positions 239-293 (TDDARRVFTELLKDKNIGAYQPWELVYPKLLDDDRFYVLDSGERRKEVFEEYCKS) constitute an FF domain.

As to quaternary structure, component of the spliceosomal complex. Interacts with prp19.

It localises to the nucleus. Its function is as follows. Component of the spliceosome involved in mRNA processing. The protein is Pre-mRNA-splicing factor dre4 (dre4) of Schizosaccharomyces pombe (strain 972 / ATCC 24843) (Fission yeast).